A 255-amino-acid chain; its full sequence is GTP cyclohydrolase III (255 aa).

Belongs to the archaeal-type GTP cyclohydrolase family.

The catalysed reaction is GTP + 3 H2O = 2-amino-5-formylamino-6-(5-phospho-D-ribosylamino)pyrimidin-4(3H)-one + 2 phosphate + 2 H(+). Its function is as follows. Catalyzes the formation of 2-amino-5-formylamino-6-ribofuranosylamino-4(3H)-pyrimidinone ribonucleotide monophosphate and inorganic phosphate from GTP. Also has an independent pyrophosphate phosphohydrolase activity. This is GTP cyclohydrolase III from Methanosphaera stadtmanae (strain ATCC 43021 / DSM 3091 / JCM 11832 / MCB-3).